The sequence spans 288 residues: 4-diphosphocytidyl-2-C-methyl-D-erythritol kinase (288 aa).

Lysine 10 is a catalytic residue. 94-104 (PVAAGLGGGSS) is an ATP binding site. Aspartate 136 is an active-site residue.

The protein belongs to the GHMP kinase family. IspE subfamily.

It catalyses the reaction 4-CDP-2-C-methyl-D-erythritol + ATP = 4-CDP-2-C-methyl-D-erythritol 2-phosphate + ADP + H(+). Its pathway is isoprenoid biosynthesis; isopentenyl diphosphate biosynthesis via DXP pathway; isopentenyl diphosphate from 1-deoxy-D-xylulose 5-phosphate: step 3/6. Its function is as follows. Catalyzes the phosphorylation of the position 2 hydroxy group of 4-diphosphocytidyl-2C-methyl-D-erythritol. The chain is 4-diphosphocytidyl-2-C-methyl-D-erythritol kinase from Lactiplantibacillus plantarum (strain ATCC BAA-793 / NCIMB 8826 / WCFS1) (Lactobacillus plantarum).